The chain runs to 407 residues: Accessory Sec system protein translocase subunit SecY2 (407 aa).

A run of 10 helical transmembrane segments spans residues 22–42 (IAFT…TIVD), 68–88 (LNVF…ISLI), 108–128 (EKFL…NQFV), 136–156 (FTEL…MWLA), 169–189 (PIVL…IVSI), 191–211 (ILML…LLLT), 245–265 (ISIM…NLIF), 280–300 (FGHY…GYLL), 343–363 (WFGT…SLLV), and 366–386 (LSEY…AMNI).

Belongs to the SecY/SEC61-alpha family. SecY2 subfamily. Component of the accessory SecA2/SecY2 protein translocase complex required to export cell wall proteins. May form heterotrimers with SecE and SecG subunits.

It is found in the cell membrane. Its function is as follows. Part of the accessory SecA2/SecY2 system specifically required for export of possible cell wall proteins. The central subunit of a protein translocation channel. This is Accessory Sec system protein translocase subunit SecY2 from Staphylococcus pseudintermedius (strain ED99).